Here is a 246-residue protein sequence, read N- to C-terminus: Acetoacetate decarboxylase (246 aa).

The active-site Schiff-base intermediate with acetoacetate is Lys-116.

Belongs to the ADC family.

The enzyme catalyses acetoacetate + H(+) = acetone + CO2. In terms of biological role, catalyzes the conversion of acetoacetate to acetone and carbon dioxide. The sequence is that of Acetoacetate decarboxylase from Burkholderia cenocepacia (strain HI2424).